Reading from the N-terminus, the 128-residue chain is Large ribosomal subunit protein eL8 (128 aa).

The protein belongs to the eukaryotic ribosomal protein eL8 family. Part of the 50S ribosomal subunit. Probably part of the RNase P complex.

Its subcellular location is the cytoplasm. Functionally, multifunctional RNA-binding protein that recognizes the K-turn motif in ribosomal RNA, the RNA component of RNase P, box H/ACA, box C/D and box C'/D' sRNAs. The chain is Large ribosomal subunit protein eL8 from Ignicoccus hospitalis (strain KIN4/I / DSM 18386 / JCM 14125).